A 597-amino-acid chain; its full sequence is FERM domain-containing protein 3 (597 aa).

One can recognise an FERM domain in the interval M32 to K312. The tract at residues S409–I435 is disordered. Over residues E423 to E432 the composition is skewed to acidic residues. The helical transmembrane segment at L531–E551 threads the bilayer.

The protein resides in the membrane. Its function is as follows. Putative tumor suppressor gene that may be implicated in the origin and progression of lung cancer. The chain is FERM domain-containing protein 3 (FRMD3) from Pongo abelii (Sumatran orangutan).